A 223-amino-acid chain; its full sequence is Agamous-like MADS-box protein AGL11 (223 aa).

The 61-residue stretch at 1-61 (MGRGKIEIKR…GRVYEYSNNN (61 aa)) folds into the MADS-box domain. Residues 87 to 177 (AQYYQQESAK…RTKIAEVERL (91 aa)) form the K-box domain.

The protein resides in the nucleus. Probable transcription factor involved in seed development. This chain is Agamous-like MADS-box protein AGL11, found in Vitis vinifera (Grape).